A 330-amino-acid polypeptide reads, in one-letter code: Flotillin-like protein FloA (330 aa).

A run of 2 helical transmembrane segments spans residues 5–25 (IILP…LFTF) and 28–48 (VALW…TLIG).

It belongs to the flotillin-like FloA family. In terms of assembly, homooligomerizes.

Its subcellular location is the cell membrane. It localises to the membrane raft. Found in functional membrane microdomains (FMM) that may be equivalent to eukaryotic membrane rafts. FMMs are highly dynamic and increase in number as cells age. Flotillins are thought to be important factors in membrane fluidity. This chain is Flotillin-like protein FloA, found in Oceanobacillus iheyensis (strain DSM 14371 / CIP 107618 / JCM 11309 / KCTC 3954 / HTE831).